Here is a 273-residue protein sequence, read N- to C-terminus: Aliphatic sulfonates import ATP-binding protein SsuB 2 (273 aa).

In terms of domain architecture, ABC transporter spans 17–241 (LLDLRITRKL…PRDRRDPTLA (225 aa)). 50–57 (GPSGCGKS) contacts ATP.

This sequence belongs to the ABC transporter superfamily. Aliphatic sulfonates importer (TC 3.A.1.17.2) family. In terms of assembly, the complex is composed of two ATP-binding proteins (SsuB), two transmembrane proteins (SsuC) and a solute-binding protein (SsuA).

Its subcellular location is the cell inner membrane. It carries out the reaction ATP + H2O + aliphatic sulfonate-[sulfonate-binding protein]Side 1 = ADP + phosphate + aliphatic sulfonateSide 2 + [sulfonate-binding protein]Side 1.. In terms of biological role, part of the ABC transporter complex SsuABC involved in aliphatic sulfonates import. Responsible for energy coupling to the transport system. This is Aliphatic sulfonates import ATP-binding protein SsuB 2 from Burkholderia lata (strain ATCC 17760 / DSM 23089 / LMG 22485 / NCIMB 9086 / R18194 / 383).